The following is a 449-amino-acid chain: Hyaluronidase-2 (449 aa).

An N-terminal signal peptide occupies residues 1 to 23; that stretch reads MYHLWIKCLAAWIFLKRCNGVHA. 2 disulfides stabilise this stretch: cysteine 47/cysteine 340 and cysteine 211/cysteine 227. 3 N-linked (GlcNAc...) asparagine glycosylation sites follow: asparagine 67, asparagine 103, and asparagine 111. Glutamate 135 serves as the catalytic Proton donor. An N-linked (GlcNAc...) asparagine glycan is attached at asparagine 153. Asparagine 357 carries N-linked (GlcNAc...) asparagine glycosylation. Disulfide bonds link cysteine 365/cysteine 376, cysteine 370/cysteine 427, and cysteine 429/cysteine 438. Asparagine 401 carries an N-linked (GlcNAc...) asparagine glycan. Residues 427-438 form the EGF-like domain; it reads CQCYQGWKGLYC.

It belongs to the glycosyl hydrolase 56 family. In terms of assembly, monomer. In terms of tissue distribution, expressed by the venom gland.

Its subcellular location is the secreted. It catalyses the reaction Random hydrolysis of (1-&gt;4)-linkages between N-acetyl-beta-D-glucosamine and D-glucuronate residues in hyaluronate.. Snake venom endo-hyaluronidase that degrades hyaluronan to smaller oligosaccharide fragments. In venom, it is not toxic by itself, but increases the diffusion of other venom proteins by degrading the extracellular matrix. In addition, it displays antiedematogenic activity. In Bitis arietans (African puff adder), this protein is Hyaluronidase-2.